The sequence spans 209 residues: Ribosomal RNA large subunit methyltransferase E (209 aa).

5 residues coordinate S-adenosyl-L-methionine: glycine 63, tryptophan 65, aspartate 83, aspartate 99, and aspartate 124. Residue lysine 164 is the Proton acceptor of the active site.

This sequence belongs to the class I-like SAM-binding methyltransferase superfamily. RNA methyltransferase RlmE family.

The protein resides in the cytoplasm. It carries out the reaction uridine(2552) in 23S rRNA + S-adenosyl-L-methionine = 2'-O-methyluridine(2552) in 23S rRNA + S-adenosyl-L-homocysteine + H(+). Functionally, specifically methylates the uridine in position 2552 of 23S rRNA at the 2'-O position of the ribose in the fully assembled 50S ribosomal subunit. This is Ribosomal RNA large subunit methyltransferase E from Escherichia coli O81 (strain ED1a).